The chain runs to 141 residues: Large ribosomal subunit protein bL17 (141 aa).

Belongs to the bacterial ribosomal protein bL17 family. As to quaternary structure, part of the 50S ribosomal subunit. Contacts protein L32.

The sequence is that of Large ribosomal subunit protein bL17 from Rhizobium meliloti (strain 1021) (Ensifer meliloti).